A 699-amino-acid chain; its full sequence is MATAREIPLNRTRNIGIMAHIDAGKTTTTERVLYYTGVSHKMGEVHEGSAVMDWMEQEQERGITITSAATTCYWLGMDQQYPKHRINIIDTPGHVDFTIEVERSLRVLDGAVAVFCSVGGVEPQSETVWRQANRYHVPRLGFVNKMDRAGANFLRVVNQVKDRLNANPIPIQLPIGAEEDFKGVIDLIREKAIYWNEADRGRTYELADIPEDMKAEVQKWREKMIEAAAESSEELMDKYLEAGDLSPEQIRQGLRQRTLANEIVPILCGSAFKNKGVQALLDAVIDYLPSPTDVPAIRGEEDDGSEGSRSASDDEPFAALAFKIASDPFVGTLTFFRVYSGILKSGDSVYNPIKGKKERIGRLLQMHSNSREEIKEVRAGDIAAAVGLKTVTTGDTICNQQNIITLEKMDFPEPVISVAIEPKTKADQEKMGVALGKLAQEDPSFRVHTDEESAQTIIEGMGELHLEIIVDRMRREFNVEANVGKPRVAYRETIRRSVEQQGKYIRQTGGRGQYGDVWLRIEPREPGAGFEFENAIVGGVVPREYIPAVEKGVREQMENGIRAGYPVVDVKVTIFEGSYHDVDSSEMAFKIAGSMAFKEGASKADPVLLEPIMKVEVVTPEEYMGDVVGDLNRRRGMIQGMDESPAGKIVDVEVPLAEMFGYATDLRSLSQGRATYTMEFLKYAEAPSNIAEAIIKQQS.

Residues 10–292 (NRTRNIGIMA…AVIDYLPSPT (283 aa)) form the tr-type G domain. Residues 19–26 (AHIDAGKT), 90–94 (DTPGH), and 144–147 (NKMD) contribute to the GTP site. Residues 292–312 (TDVPAIRGEEDDGSEGSRSAS) are disordered.

Belongs to the TRAFAC class translation factor GTPase superfamily. Classic translation factor GTPase family. EF-G/EF-2 subfamily.

It localises to the cytoplasm. Its function is as follows. Catalyzes the GTP-dependent ribosomal translocation step during translation elongation. During this step, the ribosome changes from the pre-translocational (PRE) to the post-translocational (POST) state as the newly formed A-site-bound peptidyl-tRNA and P-site-bound deacylated tRNA move to the P and E sites, respectively. Catalyzes the coordinated movement of the two tRNA molecules, the mRNA and conformational changes in the ribosome. The chain is Elongation factor G from Coxiella burnetii (strain RSA 331 / Henzerling II).